A 360-amino-acid polypeptide reads, in one-letter code: Methylthioribose-1-phosphate isomerase (360 aa).

Asp-246 functions as the Proton donor in the catalytic mechanism.

This sequence belongs to the eIF-2B alpha/beta/delta subunits family. MtnA subfamily.

Its subcellular location is the cytoplasm. It localises to the nucleus. The catalysed reaction is 5-(methylsulfanyl)-alpha-D-ribose 1-phosphate = 5-(methylsulfanyl)-D-ribulose 1-phosphate. Its pathway is amino-acid biosynthesis; L-methionine biosynthesis via salvage pathway; L-methionine from S-methyl-5-thio-alpha-D-ribose 1-phosphate: step 1/6. In terms of biological role, catalyzes the interconversion of methylthioribose-1-phosphate (MTR-1-P) into methylthioribulose-1-phosphate (MTRu-1-P). The protein is Methylthioribose-1-phosphate isomerase of Aedes aegypti (Yellowfever mosquito).